The chain runs to 186 residues: Akirin-1 (186 aa).

Positions Met1 to Arg64 are disordered. The short motif at Pro22–Cys27 is the Nuclear localization signal element. Residues Gln49–Gly60 are compositionally biased toward low complexity. The short motif at Ser183–Ser186 is the SYVS motif element.

It belongs to the akirin family.

The protein localises to the nucleus. Its function is as follows. Molecular adapter that acts as a bridge between proteins, and which is involved skeletal muscle development. Functions as a signal transducer for MSTN during skeletal muscle regeneration and myogenesis. This chain is Akirin-1, found in Xenopus tropicalis (Western clawed frog).